Here is a 399-residue protein sequence, read N- to C-terminus: 5'-C-glycyluridine monooxygenase-decarboxylase (399 aa).

Thr-179 contributes to the phosphate binding site. Position 230 is an N6-(pyridoxal phosphate)lysine (Lys-230). Phosphate is bound by residues Arg-318, Arg-322, Arg-353, and Arg-367.

This sequence belongs to the SelA family. As to quaternary structure, homooctamer; tetramer of homodimers. Requires pyridoxal 5'-phosphate as cofactor.

It carries out the reaction (5'S,6'R)-C-glycyluridine + O2 = uridine-5'-carboxamide + CO2 + H2O. Its pathway is antibiotic biosynthesis. Activity is dependent on phosphate. In terms of biological role, monooxygenase-decarboxylase involved in the biosynthesis of the capuramycin-type nucleoside antibiotic A-503083. Catalyzes the oxidative decarboxylation of 5'-C-glycyluridine (GlyU) to uridine-5'-carboxamide (CarU). Is stereospecific for the (5'S,6'R)-diastereomer of GlyU. Directly incorporates a single oxygen atom from O(2) into the product CarU. The sequence is that of 5'-C-glycyluridine monooxygenase-decarboxylase from Streptomyces sp.